A 545-amino-acid chain; its full sequence is MALPSPASEEAEGPCQEANQEYQEPVCSPVPEPEPEPEPEPEPDPEPVPVPPPEPQPEPEPQPLPDPAPLPELGFEAEPVQEPEPTPTVETRGTARGFQPPEGGFGWIVVFAATWCNGSIFGIHNSVGILYSMLLEEEKEKNRQVEFQAAWVGALAMGMIFFCSPIVSIFTDRLGCRITATTGAAVAFIGLHTSSFTSSLSLRYFTYGILFGCGCSFAFQPSLVILGHYFQRRLGLANGVVSAGSSIFSMSFPFLIKMLGDKIKLAQTFQVLSTFMFVLTLLSLTYRPLLPSSQDTPSKRGAHTLRQRFLVQFRKYFNMRVFRQRTYRIWAFGIAAAALGYFVPYVHLMKYVEDKFKEIKETWVLLVCIGATSGLGRLVSGHISDSIPGLKKIYLQVLSFLLLGLMSMMIPLCRDFGGLIVVCLFLGLCDGFFITIMAPIAFELVGPMQASQAIGYLLGMMALPMIAGPPIAGLLRNCFGDYHVAFYFAGVPPIIGAVILFFVPLMHQRMFKKEQRDSSKDKMLSHDPDPNGELLPGSPTPEEPI.

The interval 1–98 (MALPSPASEE…VETRGTARGF (98 aa)) is disordered. Ala-2 carries the post-translational modification N-acetylalanine. Residues 2–102 (ALPSPASEEA…GTARGFQPPE (101 aa)) are Cytoplasmic-facing. A run of 2 repeats spans residues 29-50 (PVPE…PVPV) and 51-72 (PPPE…PLPE). Residues 29-72 (PVPEPEPEPEPEPEPDPEPVPVPPPEPQPEPEPQPLPDPAPLPE) form a 2 X 22 AA approximate tandem repeats region. The span at 33 to 45 (PEPEPEPEPEPDP) shows a compositional bias: acidic residues. Residues 46–70 (EPVPVPPPEPQPEPEPQPLPDPAPL) show a composition bias toward pro residues. The chain crosses the membrane as a helical span at residues 103–123 (GGFGWIVVFAATWCNGSIFGI). Residues 124-149 (HNSVGILYSMLLEEEKEKNRQVEFQA) lie on the Extracellular side of the membrane. A helical membrane pass occupies residues 150–170 (AWVGALAMGMIFFCSPIVSIF). At 171–177 (TDRLGCR) the chain is on the cytoplasmic side. Residues 178–198 (ITATTGAAVAFIGLHTSSFTS) traverse the membrane as a helical segment. Over 199–206 (SLSLRYFT) the chain is Extracellular. A helical membrane pass occupies residues 207 to 227 (YGILFGCGCSFAFQPSLVILG). The Cytoplasmic segment spans residues 228–235 (HYFQRRLG). Residues 236-256 (LANGVVSAGSSIFSMSFPFLI) traverse the membrane as a helical segment. Over 257 to 264 (KMLGDKIK) the chain is Extracellular. Residues 265-285 (LAQTFQVLSTFMFVLTLLSLT) form a helical membrane-spanning segment. Topologically, residues 286-328 (YRPLLPSSQDTPSKRGAHTLRQRFLVQFRKYFNMRVFRQRTYR) are cytoplasmic. The chain crosses the membrane as a helical span at residues 329-349 (IWAFGIAAAALGYFVPYVHLM). At 350 to 362 (KYVEDKFKEIKET) the chain is on the extracellular side. The chain crosses the membrane as a helical span at residues 363–383 (WVLLVCIGATSGLGRLVSGHI). Topologically, residues 384–392 (SDSIPGLKK) are cytoplasmic. The chain crosses the membrane as a helical span at residues 393-413 (IYLQVLSFLLLGLMSMMIPLC). The Extracellular portion of the chain corresponds to 414–415 (RD). The chain crosses the membrane as a helical span at residues 416–436 (FGGLIVVCLFLGLCDGFFITI). The Cytoplasmic portion of the chain corresponds to 437–453 (MAPIAFELVGPMQASQA). Residues 454–474 (IGYLLGMMALPMIAGPPIAGL) traverse the membrane as a helical segment. Over 475–483 (LRNCFGDYH) the chain is Extracellular. Residues 484–504 (VAFYFAGVPPIIGAVILFFVP) traverse the membrane as a helical segment. The Cytoplasmic segment spans residues 505-545 (LMHQRMFKKEQRDSSKDKMLSHDPDPNGELLPGSPTPEEPI). A compositionally biased stretch (basic and acidic residues) spans 514 to 529 (EQRDSSKDKMLSHDPD). The tract at residues 514 to 545 (EQRDSSKDKMLSHDPDPNGELLPGSPTPEEPI) is disordered. Thr-540 is subject to Phosphothreonine.

The protein belongs to the major facilitator superfamily. Monocarboxylate porter (TC 2.A.1.13) family. In terms of assembly, monomer. Homodimer. Homooligomer. In terms of tissue distribution, expressed in cerebral microvessels.

The protein localises to the cell membrane. It is found in the apical cell membrane. It catalyses the reaction 3,3',5-triiodo-L-thyronine(out) = 3,3',5-triiodo-L-thyronine(in). It carries out the reaction 3,3',5'-triiodo-L-thyronine(out) = 3,3',5'-triiodo-L-thyronine(in). The enzyme catalyses L-thyroxine(out) = L-thyroxine(in). The catalysed reaction is 3,3'-diiodo-L-thyronine(out) = 3,3'-diiodo-L-thyronine(in). Specific thyroid hormone transmembrane transporter, that mediates both uptake and efflux of thyroid hormones across the cell membrane independently of pH or a Na(+) gradient. Major substrates are the iodothyronines T3 and T4 and to a lesser extent rT3 and 3,3-diiodothyronine (3,3'-T2). Acts as an important mediator of thyroid hormone transport, especially T3, through the blood-brain barrier. This chain is Monocarboxylate transporter 8 (Slc16a2), found in Mus musculus (Mouse).